The chain runs to 263 residues: ABC transporter I family member 17 (263 aa).

In terms of domain architecture, ABC transporter spans 29-260; it reads IRVHDLTRVA…THPMAQRFLQ (232 aa). Residue 62-69 participates in ATP binding; sequence GPSGSGKS.

Belongs to the ABC transporter superfamily. ABCI family.

The polypeptide is ABC transporter I family member 17 (ABCI17) (Arabidopsis thaliana (Mouse-ear cress)).